We begin with the raw amino-acid sequence, 89 residues long: Small ribosomal subunit protein uS15 (89 aa).

Residues 1–25 are disordered; that stretch reads MSLDTTEKQQLINTHQTHGTDTGSA. The span at 8–25 shows a compositional bias: polar residues; the sequence is KQQLINTHQTHGTDTGSA.

It belongs to the universal ribosomal protein uS15 family. In terms of assembly, part of the 30S ribosomal subunit. Forms a bridge to the 50S subunit in the 70S ribosome, contacting the 23S rRNA.

One of the primary rRNA binding proteins, it binds directly to 16S rRNA where it helps nucleate assembly of the platform of the 30S subunit by binding and bridging several RNA helices of the 16S rRNA. Functionally, forms an intersubunit bridge (bridge B4) with the 23S rRNA of the 50S subunit in the ribosome. The polypeptide is Small ribosomal subunit protein uS15 (Parasynechococcus marenigrum (strain WH8102)).